The primary structure comprises 1103 residues: MLAGRPGAQSAGAGVGAGPPDAPGARDGGGRPRPGAYLDMKIHLEKNLEEERQMLLQQQKLCRNRARKYFMESNRRRKAFEEKRQKQEEREYQIRERILQQRKQKFEEVTEKFQRAHVPVSQRRRAVFQNPVPPLEEALKQIQESNLKSEVNIPLFHRPATNWRAIDSALPSTLSKNDHKHQKHLVRRINRNKEMKENNIANLATNKNVFQLKLEETQKLLEDQHLSDLQKFCDEVNQITNSETLSSIDSLEAGEREEIYITLSMKPSTSTQQNSVPLQSANLQAAHLDCFDEDKLSFSKTQHINNWLTNLDAQNSQPVASFSDILIKSNVLPSWECLNSKEQNPPALSRTVGRTTRTTSDSMVFVCSPSVVALDKKGENTAESNVVRASDPTEGAVQRERPAQMESPTFKVSRAWTTAESLTQETASFSVQERPSELTWESRTASIPASSVTVLSPNLQAGGPLAENNTQIKEIDPVQCSDKLDELKNMEHERINHLNCNKEKYLFSPNFQTTCALQNSNSNDRKQKESGPSAALCNNPPDCDLPEQHSIKHSVHEQNGVRLLKSILKKESRYEHNYLRALVMKQGFKFRHQKAETVRDSIELTKQKGKGAEISKTSKKLRWFDESANLENAVDDCHPVRNRAGMAPRWLQRCHTNSGTYNLTSIPECPVHSAAGKKAKADSVPENATDLGRYEIDSVPLNSSVSLGFSFAKQAWSACRRGESKAPVHASDSKTQKTKPQRGVKFTRRTGSSKVQKGLVQNRKPTVSQPQTSSKANTVAQTQGKLIITHPPPKPPTNIKSGKNMQVSPGQSAIPEHSQNVMTQSCLSPASVLPTEYHLNQGTQESSLPFSDTCSNLPAVSPALPTPYSSECQTLAKANSNGTAFLKDGAVYCTHRSPVCEESYQSFTHRNTEEESILPWRRRINGHQNERTTDSTVTRRKQIVENKWKRLLEQKRKTSGSIGMKYTEQITHFGQNVPPSTTEQIQAPRGVKTEEVSDSTSEFLVAENLMNSSVPEDEILTAINSKHLQKPNLSQPTNVCALSAEEQKILKSLHHLDERLYYVQEAIRKNPSIKNTLQLIPLLSSQPRASLSPDVGSTVQRKY.

The segment covering 1–12 has biased composition (low complexity); that stretch reads MLAGRPGAQSAG. Residues 1 to 36 form a disordered region; that stretch reads MLAGRPGAQSAGAGVGAGPPDAPGARDGGGRPRPGA. Coiled-coil stretches lie at residues 43-116 and 182-222; these read HLEK…FQRA and QKHL…KLLE. Disordered regions lie at residues 380–409 and 723–812; these read NTAE…ESPT and ESKA…PGQS. Residues 723–735 show a composition bias toward basic and acidic residues; sequence ESKAPVHASDSKT. Over residues 736 to 748 the composition is skewed to basic residues; it reads QKTKPQRGVKFTR. Polar residues-rich tracts occupy residues 763 to 784 and 798 to 812; these read RKPT…QTQG and NIKS…PGQS.

As to quaternary structure, interacts with DCTN1.

The protein resides in the midbody. Its subcellular location is the cytoplasm. It localises to the cytoskeleton. The protein localises to the microtubule organizing center. It is found in the centrosome. The protein resides in the cilium basal body. Its function is as follows. Participate in cytokinesis. Necessary for microtubules and mitotic spindle organization. Involved in primary cilium formation. This Mus musculus (Mouse) protein is Centrosomal protein of 126 kDa.